The chain runs to 680 residues: DNA-directed RNA polymerase subunit beta' (680 aa).

Zn(2+) contacts are provided by cysteine 68, cysteine 70, cysteine 86, and cysteine 89. Residues aspartate 488, aspartate 490, and aspartate 492 each contribute to the Mg(2+) site.

This sequence belongs to the RNA polymerase beta' chain family. RpoC1 subfamily. In plastids the minimal PEP RNA polymerase catalytic core is composed of four subunits: alpha, beta, beta', and beta''. When a (nuclear-encoded) sigma factor is associated with the core the holoenzyme is formed, which can initiate transcription. It depends on Mg(2+) as a cofactor. Requires Zn(2+) as cofactor.

The protein resides in the plastid. It is found in the chloroplast. It carries out the reaction RNA(n) + a ribonucleoside 5'-triphosphate = RNA(n+1) + diphosphate. In terms of biological role, DNA-dependent RNA polymerase catalyzes the transcription of DNA into RNA using the four ribonucleoside triphosphates as substrates. This chain is DNA-directed RNA polymerase subunit beta', found in Nicotiana tabacum (Common tobacco).